Reading from the N-terminus, the 99-residue chain is Large ribosomal subunit protein bL21 (99 aa).

Belongs to the bacterial ribosomal protein bL21 family. Part of the 50S ribosomal subunit. Contacts protein L20.

In terms of biological role, this protein binds to 23S rRNA in the presence of protein L20. The protein is Large ribosomal subunit protein bL21 of Mycoplasma mobile (strain ATCC 43663 / 163K / NCTC 11711) (Mesomycoplasma mobile).